A 182-amino-acid polypeptide reads, in one-letter code: ATP-dependent protease subunit HslV (182 aa).

The active site involves Thr2. Gly157, Cys160, and Thr163 together coordinate Na(+).

This sequence belongs to the peptidase T1B family. HslV subfamily. As to quaternary structure, a double ring-shaped homohexamer of HslV is capped on each side by a ring-shaped HslU homohexamer. The assembly of the HslU/HslV complex is dependent on binding of ATP.

It is found in the cytoplasm. The enzyme catalyses ATP-dependent cleavage of peptide bonds with broad specificity.. Allosterically activated by HslU binding. Its function is as follows. Protease subunit of a proteasome-like degradation complex believed to be a general protein degrading machinery. The protein is ATP-dependent protease subunit HslV of Sodalis glossinidius (strain morsitans).